The following is a 674-amino-acid chain: U-box domain-containing protein 16 (674 aa).

The U-box domain maps to 273-347 (NIPADFRCPI…VLWCRDQKIP (75 aa)). ARM repeat units lie at residues 399 to 438 (TVAR…NLSI), 441 to 481 (QNKT…SLAG), and 484 to 523 (AYRR…NLVA).

The enzyme catalyses S-ubiquitinyl-[E2 ubiquitin-conjugating enzyme]-L-cysteine + [acceptor protein]-L-lysine = [E2 ubiquitin-conjugating enzyme]-L-cysteine + N(6)-ubiquitinyl-[acceptor protein]-L-lysine.. It participates in protein modification; protein ubiquitination. Its function is as follows. Functions as an E3 ubiquitin ligase. The protein is U-box domain-containing protein 16 (PUB16) of Arabidopsis thaliana (Mouse-ear cress).